Consider the following 597-residue polypeptide: Aspartate--tRNA ligase (597 aa).

E171 provides a ligand contact to L-aspartate. The aspartate stretch occupies residues 195–198; it reads QLFK. R217 contacts L-aspartate. ATP contacts are provided by residues 217–219 and Q226; that span reads RDE. Residue H448 coordinates L-aspartate. E482 contacts ATP. R489 serves as a coordination point for L-aspartate. An ATP-binding site is contributed by 534 to 537; the sequence is GLDR.

This sequence belongs to the class-II aminoacyl-tRNA synthetase family. Type 1 subfamily. Homodimer.

It is found in the cytoplasm. It catalyses the reaction tRNA(Asp) + L-aspartate + ATP = L-aspartyl-tRNA(Asp) + AMP + diphosphate. Its function is as follows. Catalyzes the attachment of L-aspartate to tRNA(Asp) in a two-step reaction: L-aspartate is first activated by ATP to form Asp-AMP and then transferred to the acceptor end of tRNA(Asp). The protein is Aspartate--tRNA ligase of Photobacterium profundum (strain SS9).